A 113-amino-acid chain; its full sequence is UPF0122 protein PEPE_0845 (113 aa).

Belongs to the UPF0122 family.

Might take part in the signal recognition particle (SRP) pathway. This is inferred from the conservation of its genetic proximity to ftsY/ffh. May be a regulatory protein. In Pediococcus pentosaceus (strain ATCC 25745 / CCUG 21536 / LMG 10740 / 183-1w), this protein is UPF0122 protein PEPE_0845.